The chain runs to 162 residues: Nucleotide-binding protein SAV_4896 (162 aa).

It belongs to the YajQ family.

Nucleotide-binding protein. In Streptomyces avermitilis (strain ATCC 31267 / DSM 46492 / JCM 5070 / NBRC 14893 / NCIMB 12804 / NRRL 8165 / MA-4680), this protein is Nucleotide-binding protein SAV_4896.